The sequence spans 366 residues: Galactoside alpha-(1,2)-fucosyltransferase 1 (366 aa).

Residues 1–8 (MWPLSHRH) are Cytoplasmic-facing. A helical; Signal-anchor for type II membrane protein transmembrane segment spans residues 9–25 (LCLAFLLVCVLSAISFF). Residues 26-366 (LHIHQDSFRH…LSPLWTLAEP (341 aa)) are Lumenal-facing. Asparagine 66, asparagine 302, and asparagine 328 each carry an N-linked (GlcNAc...) asparagine glycan.

It belongs to the glycosyltransferase 11 family.

Its subcellular location is the golgi apparatus. The protein localises to the golgi stack membrane. The catalysed reaction is a beta-D-galactosyl-(1-&gt;4)-N-acetyl-beta-D-glucosaminyl derivative + GDP-beta-L-fucose = an alpha-L-Fuc-(1-&gt;2)-beta-D-Gal-(1-&gt;4)-beta-D-GlcNAc derivative + GDP + H(+). It carries out the reaction a ganglioside GA1 + GDP-beta-L-fucose = a ganglioside Fuc-GA1 + GDP + H(+). The enzyme catalyses a beta-D-Gal-(1-&gt;3)-beta-D-GlcNAc-(1-&gt;3)-beta-D-Gal-(1-&gt;4)-beta-D-Glc-(1&lt;-&gt;1')-Cer(d18:1(4E)) + GDP-beta-L-fucose = alpha-L-fucosyl-(1-&gt;2)- beta-D-galactosyl-(1-&gt;3)-N-acetyl-beta-D-glucosaminyl-(1-&gt;3)-beta-D-galactosyl-(1-&gt;4)-beta-D-glucosyl-(1&lt;-&gt;1')-N-acylsphing-4-enine + GDP + H(+). It catalyses the reaction a neolactoside nLc4Cer(d18:1(4E)) + GDP-beta-L-fucose = a neolactoside IV(2)-alpha-Fuc-nLc4Cer(d18:1(4E)) + GDP + H(+). The catalysed reaction is a ganglioside GM1 + GDP-beta-L-fucose = a ganglioside Fuc-GM1 + GDP + H(+). It carries out the reaction beta-D-galactosyl-(1-&gt;3)-N-acetyl-D-galactosamine + GDP-beta-L-fucose = alpha-L-fucosyl-(1-&gt;2)-beta-D-galactosyl-(1-&gt;3)-N-acetyl-D-galactosamine + GDP + H(+). It functions in the pathway protein modification; protein glycosylation. Catalyzes the transfer of L-fucose, from a guanosine diphosphate-beta-L-fucose, to the terminal galactose residue of glycoconjugates through an alpha(1,2) linkage leading to H antigen synthesis that is an intermediate substrate in the synthesis of ABO blood group antigens. H antigen is essential for maturation of the glomerular layer of the main olfactory bulb, in cell migration and early cell-cell contacts during tumor associated angiogenesis. Preferentially fucosylates soluble lactose and to a lesser extent fucosylates glycolipids gangliosides GA1 and GM1a. This chain is Galactoside alpha-(1,2)-fucosyltransferase 1, found in Ateles belzebuth (White-bellied spider monkey).